The primary structure comprises 841 residues: Nuclear RNA export factor 2 (841 aa).

An RNA-binding unit probably involved in Piwi-dependent recruitment and single-stranded RNA-PPNP complex formation region spans residues methionine 1–phenylalanine 285. LRR repeat units lie at residues arginine 200–alanine 221, aspartate 224–leucine 245, and arginine 249–isoleucine 270. A necessary for silencing function region spans residues asparagine 286 to phenylalanine 553. In terms of domain architecture, RRM spans tryptophan 325 to valine 408. LRR repeat units follow at residues threonine 475 to glycine 496, cysteine 500 to glycine 521, and proline 524 to tyrosine 545. Positions leucine 585–isoleucine 758 constitute an NTF2 domain. The TAP-C domain maps to aspartate 788–alanine 841.

This sequence belongs to the NXF family. In the ovaries, part of a complex composed of at least Panx, nxf2, piwi and Nxt1. The complex is knowns as Panx-induced cotranscriptional silencing (PICTS) complex, Panx-nxf2-dependent TAP/p15 silencing (Pandas complex), SFiNX (silencing factor interacting nuclear export variant) or piwi-Panx-nxf2-p15 (PPNP) complex. Interacts (via TAP-C domain) with Panx (via NIR region); the interaction is direct. Interacts (via NTF2 domain) with Nxt1; the interaction is direct and prevents Nxt1 binding to nucleoporins. Interacts with sbr/Nxf1. Expressed in female gonads (at protein level). Expressed ubiquitously.

It is found in the cytoplasm. The protein resides in the nucleus. It localises to the nucleoplasm. Functionally, may be involved in the export of mRNA from the nucleus to the cytoplasm. In the ovaries, forms a complex with nxf2, piwi and Nxt1 which acts as effectors of cotranscriptional transposon silencing. On recruitment to a target transcript, interacts with single stranded RNA, thereby anchoring the complex via the nascent target transcript to chromatin and allowing Panx to recruit silencing effectors to establishing repressive heterochromatin at transposon loci. Does not affect piRNA biogenesis. The interaction with Panx stabilizes the nuclear protein complex. Does not bind nucleoporins, but regulates sbr/Nxf1 binding to nucleoporins and, indirectly, transposon exports. In Drosophila melanogaster (Fruit fly), this protein is Nuclear RNA export factor 2 (nxf2).